We begin with the raw amino-acid sequence, 134 residues long: Holo-[acyl-carrier-protein] synthase (134 aa).

Asp8 and Glu57 together coordinate Mg(2+).

The protein belongs to the P-Pant transferase superfamily. AcpS family. The cofactor is Mg(2+).

Its subcellular location is the cytoplasm. The catalysed reaction is apo-[ACP] + CoA = holo-[ACP] + adenosine 3',5'-bisphosphate + H(+). Transfers the 4'-phosphopantetheine moiety from coenzyme A to a Ser of acyl-carrier-protein. The polypeptide is Holo-[acyl-carrier-protein] synthase (Rhizobium etli (strain CIAT 652)).